Here is a 292-residue protein sequence, read N- to C-terminus: Nucleotide-binding protein azo0399 (292 aa).

8 to 15 lines the ATP pocket; sequence GLSGSGKS. 57-60 contributes to the GTP binding site; that stretch reads DMRS.

Belongs to the RapZ-like family.

Its function is as follows. Displays ATPase and GTPase activities. The chain is Nucleotide-binding protein azo0399 from Azoarcus sp. (strain BH72).